Consider the following 234-residue polypeptide: MGGCVGAQHDSSGSLNENSDGTGVALGRNQPLKKEKPKWKSDYPMTDGQLRSKRDEFWDTAPAFEGRKEIWDALKAAAHAFESNDHELAQAIIDGANITLPHGALTECYDELGNRYQLPVYCLAPPINMIEEKSDIETLDIPEPPPNSGHESQLRLRLSTGKDLRLVVRSTDTVFHMKRRLHATEGVEPGSQRWFFSGRPLTDKMKLEELKIPKDYVVQVIVSQPVQTPTPVEN.

The tract at residues 1–46 (MGGCVGAQHDSSGSLNENSDGTGVALGRNQPLKKEKPKWKSDYPMT) is disordered. Polar residues predominate over residues 9 to 21 (HDSSGSLNENSDG). Basic and acidic residues predominate over residues 32 to 41 (LKKEKPKWKS). The 76-residue stretch at 152-227 (SQLRLRLSTG…VQVIVSQPVQ (76 aa)) folds into the Ubiquitin-like domain.

The protein localises to the cytoplasm. This is Ubiquitin domain-containing protein 2 (Ubtd2) from Mus musculus (Mouse).